The following is a 514-amino-acid chain: Multifunctional alkaline phosphatase superfamily protein PehA (514 aa).

The Mn(2+) site is built by Asp-12, Cys-57, Asp-324, and His-325. Cys-57 acts as the Nucleophile in catalysis. Cys-57 carries the 3-oxoalanine (Cys) modification.

The protein belongs to the alkaline phosphatase superfamily. As to quaternary structure, homotetramer. Mn(2+) is required as a cofactor. In terms of processing, the conversion to 3-oxoalanine (also known as C-formylglycine, FGly), of a serine or cysteine residue in prokaryotes and of a cysteine residue in eukaryotes, is critical for catalytic activity. Phosphate triester hydrolytic activity is retained with unmodified cysteine acting as a nucleophile.

Its activity is regulated as follows. Anions including Cl(-) and CH3COO(-), and SO4(2-) salts stimulate activity 20-40% at 100 mM. In terms of biological role, hydrolytic enzyme with a broad substrate specificity acting on phosphate diesters and phosphonate monoesters. Hydrolyzes phosphate mono- and triesters, sulfate monoesters and sulfonate monoesters. Hydrolyzes glyphosate monoesters. Does not hydrolyze DNA or cGMP. Hydrolyzes glyceryl glyphosate, but this substrate has a much lower affinity than the glyphosate monoesters. This Trinickia caryophylli (Paraburkholderia caryophylli) protein is Multifunctional alkaline phosphatase superfamily protein PehA.